A 465-amino-acid polypeptide reads, in one-letter code: Antithrombin-III (465 aa).

The signal sequence occupies residues 1–32; the sequence is MISNGIGTVTTGKRSMCLFPLLLIGLWGCVTC. 2 cysteine pairs are disulfide-bonded: Cys-41–Cys-161 and Cys-54–Cys-128. Thr-64 bears the Phosphothreonine mark. The residue at position 69 (Ser-69) is a Phosphoserine. Residue Trp-82 coordinates heparin. An N-linked (GlcNAc...) asparagine glycan is attached at Asn-129. Residue Arg-162 coordinates heparin. Residue Asn-168 is glycosylated (N-linked (GlcNAc...) asparagine). Arg-178 provides a ligand contact to heparin. Asn-188 and Asn-225 each carry an N-linked (GlcNAc...) asparagine glycan. An intrachain disulfide couples Cys-280 to Cys-463.

Belongs to the serpin family. In terms of assembly, forms protease inhibiting heterodimer with TMPRSS7. Phosphorylated by FAM20C in the extracellular medium. As to expression, plasma.

The protein resides in the secreted. It is found in the extracellular space. Most important serine protease inhibitor in plasma that regulates the blood coagulation cascade. AT-III inhibits thrombin, matriptase-3/TMPRSS7, as well as factors IXa, Xa and XIa. Its inhibitory activity is greatly enhanced in the presence of heparin. The polypeptide is Antithrombin-III (SERPINC1) (Ovis aries (Sheep)).